The primary structure comprises 139 residues: Proline-rich protein 13 (139 aa).

A disordered region spans residues 1–139 (MWNPSAGPNP…SSSSSSSDSD (139 aa)). 2 stretches are compositionally biased toward pro residues: residues 24–62 (ACPP…PQPG) and 70–91 (GPYP…PPAP). Positions 103 to 124 (KTRKKMKKAHKKSHKHHKHGKH) are enriched in basic residues. Over residues 125–139 (SSSSSSSSSSSSDSD) the composition is skewed to low complexity.

It localises to the nucleus. Negatively regulates TSP1 expression at the level of transcription. This down-regulation was shown to reduce taxane-induced apoptosis. The polypeptide is Proline-rich protein 13 (Prr13) (Rattus norvegicus (Rat)).